A 378-amino-acid chain; its full sequence is Inner membrane protein YibH (378 aa).

The Periplasmic segment spans residues 1-3 (MDL). The chain crosses the membrane as a helical span at residues 4-24 (LIVLTYVALAWAVFKIFRIPV). Topologically, residues 25 to 26 (NQ) are cytoplasmic. Residues 27–47 (WTLATAALGGVFLVSGLILLM) traverse the membrane as a helical segment. Residues 48–54 (NYNHPYT) are Periplasmic-facing. A helical membrane pass occupies residues 55 to 75 (FTAQKAVIAIPITPQVTGIVT). Residues 76-232 (EVTDKNNQLI…RAPSNGYVTQ (157 aa)) lie on the Cytoplasmic side of the membrane. A helical transmembrane segment spans residues 233–253 (VLIRPGTYAAALPLRPVMVFI). Over 254–280 (PEQKRQIVAQFRQNSLLRLKPGDDAEV) the chain is Periplasmic. Residues 281-301 (VFNALPGQVFHGKLTSILPVV) form a helical membrane-spanning segment. The Cytoplasmic portion of the chain corresponds to 302–309 (PGGSYQAQ). Residues 310-330 (GVLQSLTVVPGTDGVLGTIEL) traverse the membrane as a helical segment. At 331 to 378 (DPNDDIDALPDGIYAQVAVYSDHFSHVSVMRKVLLRMTSWMHYLYLDH) the chain is on the periplasmic side.

Belongs to the membrane fusion protein (MFP) (TC 8.A.1) family.

Its subcellular location is the cell inner membrane. The polypeptide is Inner membrane protein YibH (yibH) (Escherichia coli O157:H7).